Here is a 177-residue protein sequence, read N- to C-terminus: Putative pre-16S rRNA nuclease (177 aa).

Residues 1–20 (MVATQQGPDRPGIDDPGRGR) form a disordered region.

This sequence belongs to the YqgF nuclease family.

The protein resides in the cytoplasm. Its function is as follows. Could be a nuclease involved in processing of the 5'-end of pre-16S rRNA. In Rhodococcus erythropolis (strain PR4 / NBRC 100887), this protein is Putative pre-16S rRNA nuclease.